The primary structure comprises 133 residues: p53 and DNA damage-regulated protein 1 (133 aa).

It belongs to the prefoldin subunit beta family. In terms of assembly, component of the PAQosome complex which is responsible for the biogenesis of several protein complexes and which consists of R2TP complex members RUVBL1, RUVBL2, RPAP3 and PIH1D1, URI complex members PFDN2, PFDN6, PDRG1, UXT and URI1 as well as ASDURF, POLR2E and DNAAF10/WDR92.

It is found in the cytoplasm. Functionally, may play a role in chaperone-mediated protein folding. In Pongo abelii (Sumatran orangutan), this protein is p53 and DNA damage-regulated protein 1 (PDRG1).